The chain runs to 468 residues: ERO1-like protein alpha (468 aa).

A signal peptide spans 1-23; it reads MGRGWGFLFGLLGAVWLLSSGHG. 8 disulfides stabilise this stretch: C35/C48, C37/C46, C85/C391, C94/C99, C94/C131, C99/C104, C208/C241, and C394/C397. Residues S106 and S143 each carry the phosphoserine modification. The residue at position 145 (S145) is a Phosphoserine; by FAM20C. FAD is bound by residues R187, T189, and W200. The FAD site is built by S252 and H255. N-linked (GlcNAc...) asparagine glycosylation is present at N280. FAD contacts are provided by R287 and R300. N-linked (GlcNAc...) asparagine glycosylation is present at N384.

It belongs to the EROs family. In terms of assembly, predominantly monomer. May function both as a monomer and a homodimer. Interacts with PDILT. Interacts with ERP44; the interaction results in retention of ERO1A in the endoplasmic reticulum. It depends on FAD as a cofactor. Post-translationally, N-glycosylated. In terms of processing, the Cys-94/Cys-99 and Cys-394/Cys-397 disulfide bonds constitute the redox-active center. The Cys-94/Cys-99 disulfide bond may accept electron from P4HB and funnel them to the active site disulfide Cys-394/Cys-397. The regulatory Cys-99/Cys-104 disulfide bond stabilizes the other regulatory bond Cys-94/Cys-131. Phosphorylated on Ser-145 by FAM20C in the Golgi which increases its enzymatic activity. Phosphorylation is induced by lactation. It is also induced by hypoxia and reductive stress. As to expression, widely expressed at low level. Expressed at high level in upper digestive tract. Highly expressed in esophagus. Weakly expressed in stomach and duodenum.

The protein localises to the endoplasmic reticulum membrane. It is found in the golgi apparatus lumen. It localises to the secreted. Its subcellular location is the cell projection. The protein resides in the dendrite. With respect to regulation, enzyme activity is tightly regulated to prevent the accumulation of reactive oxygen species in the endoplasmic reticulum. Reversibly down-regulated by the formation of disulfide bonds between the active site Cys-94 and Cys-131, and between Cys-99 and Cys-104. Glutathione may be required to regulate its activity in the endoplasmic reticulum. Functionally, oxidoreductase involved in disulfide bond formation in the endoplasmic reticulum. Efficiently reoxidizes P4HB/PDI, the enzyme catalyzing protein disulfide formation, in order to allow P4HB to sustain additional rounds of disulfide formation. Following P4HB reoxidation, passes its electrons to molecular oxygen via FAD, leading to the production of reactive oxygen species (ROS) in the cell. Required for the proper folding of immunoglobulins. Plays an important role in ER stress-induced, CHOP-dependent apoptosis by activating the inositol 1,4,5-trisphosphate receptor IP3R1. Involved in the release of the unfolded cholera toxin from reduced P4HB/PDI in case of infection by V.cholerae, thereby playing a role in retrotranslocation of the toxin. The chain is ERO1-like protein alpha from Homo sapiens (Human).